Reading from the N-terminus, the 140-residue chain is Large ribosomal subunit protein bL17 (140 aa).

The span at 119-133 (DPSAKGAADRARLEE) shows a compositional bias: basic and acidic residues. The segment at 119-140 (DPSAKGAADRARLEEEGGMTEE) is disordered.

This sequence belongs to the bacterial ribosomal protein bL17 family. As to quaternary structure, part of the 50S ribosomal subunit. Contacts protein L32.

This chain is Large ribosomal subunit protein bL17, found in Maricaulis maris (strain MCS10) (Caulobacter maris).